Consider the following 514-residue polypeptide: Glutathione-binding protein GsiB (514 aa).

Positions 1 to 27 are cleaved as a signal peptide; sequence MSVMTIQRRWLVAAGVTAAMVASPVWA.

Belongs to the bacterial solute-binding protein 5 family. The complex is composed of two ATP-binding proteins (GsiA), two transmembrane proteins (GsiC and GsiD) and a solute-binding protein (GsiB).

It localises to the periplasm. Functionally, part of the ABC transporter complex GsiABCD involved in glutathione import. Binds glutathione. The sequence is that of Glutathione-binding protein GsiB from Pectobacterium atrosepticum (strain SCRI 1043 / ATCC BAA-672) (Erwinia carotovora subsp. atroseptica).